Here is a 602-residue protein sequence, read N- to C-terminus: Elongation factor 4 (602 aa).

Residues 7–189 form the tr-type G domain; sequence KYIRNFSIVA…AIVNKVPAPD (183 aa). Residues 19–24 and 136–139 contribute to the GTP site; these read DHGKST and NKID.

The protein belongs to the TRAFAC class translation factor GTPase superfamily. Classic translation factor GTPase family. LepA subfamily.

The protein resides in the cell membrane. It catalyses the reaction GTP + H2O = GDP + phosphate + H(+). Required for accurate and efficient protein synthesis under certain stress conditions. May act as a fidelity factor of the translation reaction, by catalyzing a one-codon backward translocation of tRNAs on improperly translocated ribosomes. Back-translocation proceeds from a post-translocation (POST) complex to a pre-translocation (PRE) complex, thus giving elongation factor G a second chance to translocate the tRNAs correctly. Binds to ribosomes in a GTP-dependent manner. The polypeptide is Elongation factor 4 (Clostridium botulinum (strain Kyoto / Type A2)).